Reading from the N-terminus, the 299-residue chain is Protease HtpX homolog (299 aa).

A run of 2 helical transmembrane segments spans residues 15–35 (ILLL…GYLF) and 39–59 (GLGG…SMIF). Position 143 (His143) interacts with Zn(2+). Residue Glu144 is part of the active site. Position 147 (His147) interacts with Zn(2+). 2 helical membrane-spanning segments follow: residues 158-178 (IAVA…RMMW) and 198-218 (IIML…ATLV). Glu227 is a binding site for Zn(2+).

The protein belongs to the peptidase M48B family. Zn(2+) is required as a cofactor.

It is found in the cell membrane. The sequence is that of Protease HtpX homolog from Streptococcus pneumoniae serotype 19F (strain G54).